A 256-amino-acid chain; its full sequence is Imidazole glycerol phosphate synthase subunit hisF1 (256 aa).

Active-site residues include D11 and D130.

Belongs to the HisA/HisF family. In terms of assembly, heterodimer of HisH and HisF.

Its subcellular location is the cytoplasm. The catalysed reaction is 5-[(5-phospho-1-deoxy-D-ribulos-1-ylimino)methylamino]-1-(5-phospho-beta-D-ribosyl)imidazole-4-carboxamide + L-glutamine = D-erythro-1-(imidazol-4-yl)glycerol 3-phosphate + 5-amino-1-(5-phospho-beta-D-ribosyl)imidazole-4-carboxamide + L-glutamate + H(+). Its pathway is amino-acid biosynthesis; L-histidine biosynthesis; L-histidine from 5-phospho-alpha-D-ribose 1-diphosphate: step 5/9. Its function is as follows. IGPS catalyzes the conversion of PRFAR and glutamine to IGP, AICAR and glutamate. The HisF subunit catalyzes the cyclization activity that produces IGP and AICAR from PRFAR using the ammonia provided by the HisH subunit. The chain is Imidazole glycerol phosphate synthase subunit hisF1 (hisF1) from Parasynechococcus marenigrum (strain WH8102).